A 252-amino-acid polypeptide reads, in one-letter code: 7-carboxy-7-deazaguanine synthase (252 aa).

Substrate contacts are provided by residues 22-24 and arginine 37; that span reads LQG. Residues 28 to 251 form the Radical SAM core domain; the sequence is FVGEPQAFVR…QVHKLVDFIP (224 aa). [4Fe-4S] cluster-binding residues include cysteine 41, cysteine 45, and cysteine 48. Threonine 102 lines the substrate pocket. Glycine 104 contributes to the S-adenosyl-L-methionine binding site.

Belongs to the radical SAM superfamily. 7-carboxy-7-deazaguanine synthase family. Homodimer. It depends on [4Fe-4S] cluster as a cofactor. S-adenosyl-L-methionine serves as cofactor. Requires Mg(2+) as cofactor.

It catalyses the reaction 6-carboxy-5,6,7,8-tetrahydropterin + H(+) = 7-carboxy-7-deazaguanine + NH4(+). Its pathway is purine metabolism; 7-cyano-7-deazaguanine biosynthesis. In terms of biological role, catalyzes the complex heterocyclic radical-mediated conversion of 6-carboxy-5,6,7,8-tetrahydropterin (CPH4) to 7-carboxy-7-deazaguanine (CDG), a step common to the biosynthetic pathways of all 7-deazapurine-containing compounds. The chain is 7-carboxy-7-deazaguanine synthase from Methanopyrus kandleri (strain AV19 / DSM 6324 / JCM 9639 / NBRC 100938).